The primary structure comprises 367 residues: 1-deoxy-D-xylulose 5-phosphate reductoisomerase (367 aa).

Residues Thr10, Gly11, Ser12, Ile13, Gly34, Lys35, Asn36, and Asn112 each contribute to the NADPH site. Lys113 serves as a coordination point for 1-deoxy-D-xylulose 5-phosphate. Glu114 serves as a coordination point for NADPH. Asp138 lines the Mn(2+) pocket. 1-deoxy-D-xylulose 5-phosphate-binding residues include Ser139, Glu140, Ser164, and His186. Residue Glu140 participates in Mn(2+) binding. NADPH is bound at residue Gly192. Ser199, Asn204, Lys205, and Glu208 together coordinate 1-deoxy-D-xylulose 5-phosphate. Glu208 contributes to the Mn(2+) binding site.

It belongs to the DXR family. Mg(2+) serves as cofactor. Mn(2+) is required as a cofactor.

The catalysed reaction is 2-C-methyl-D-erythritol 4-phosphate + NADP(+) = 1-deoxy-D-xylulose 5-phosphate + NADPH + H(+). Its pathway is isoprenoid biosynthesis; isopentenyl diphosphate biosynthesis via DXP pathway; isopentenyl diphosphate from 1-deoxy-D-xylulose 5-phosphate: step 1/6. Catalyzes the NADPH-dependent rearrangement and reduction of 1-deoxy-D-xylulose-5-phosphate (DXP) to 2-C-methyl-D-erythritol 4-phosphate (MEP). This chain is 1-deoxy-D-xylulose 5-phosphate reductoisomerase, found in Thermus thermophilus (strain ATCC BAA-163 / DSM 7039 / HB27).